Consider the following 498-residue polypeptide: ATP synthase subunit beta, chloroplastic (498 aa).

Phosphothreonine is present on Thr6. Phosphoserine is present on Ser13. 172-179 (GGAGVGKT) is a binding site for ATP.

The protein belongs to the ATPase alpha/beta chains family. As to quaternary structure, F-type ATPases have 2 components, CF(1) - the catalytic core - and CF(0) - the membrane proton channel. CF(1) has five subunits: alpha(3), beta(3), gamma(1), delta(1), epsilon(1). CF(0) has four main subunits: a(1), b(1), b'(1) and c(9-12).

It is found in the plastid. The protein localises to the chloroplast thylakoid membrane. It catalyses the reaction ATP + H2O + 4 H(+)(in) = ADP + phosphate + 5 H(+)(out). In terms of biological role, produces ATP from ADP in the presence of a proton gradient across the membrane. The catalytic sites are hosted primarily by the beta subunits. This Raphanus sativus (Radish) protein is ATP synthase subunit beta, chloroplastic.